A 787-amino-acid chain; its full sequence is PAN2-PAN3 deadenylation complex subunit pan3 (787 aa).

The segment at 1–20 is disordered; it reads MNSGLTPSPSPAVAAAGPAG. Residues 11–20 are compositionally biased toward low complexity; it reads PAVAAAGPAG. Residues 23 to 51 form a C3H1-type zinc finger; it reads GSKLKFCRYYAKDRTCFYGDECQFLHDDQ. Disordered stretches follow at residues 131–162, 179–210, and 226–291; these read EATY…AAHD, TMSQ…MSQS, and GGPT…PPST. Composition is skewed to low complexity over residues 143 to 154 and 200 to 210; these read NSSSSPSLLNDS and STSRLSNMSQS. A PABPC-interacting motif-2 (PAM-2) motif is present at residues 185 to 200; the sequence is KTPNPTASEFIPKGGS. The segment covering 265–290 has biased composition (polar residues); that stretch reads TPNPANYMVPTSASTPVTNSVSQPPS. Positions 365-650 are pseudokinase domain; that stretch reads QIDQADMPGV…SVNDIMPMIG (286 aa). ATP contacts are provided by residues Arg-422, 471–478, and 545–546; these read DFHAGSET and TK. The stretch at 651–689 forms a coiled coil; the sequence is ARFYTQLDAAQMRNDVIEEDLAKEVQNGRLFRLLAKLGT. The tract at residues 690–787 is knob domain; the sequence is INERPEFQKD…ELVAAANGQL (98 aa).

This sequence belongs to the protein kinase superfamily. PAN3 family. In terms of assembly, homodimer. Forms a heterotrimer with a catalytic subunit pan2 to form the poly(A)-nuclease (PAN) deadenylation complex. Interacts (via PAM-2 motif) with poly(A)-binding protein pabpc1 (via PABC domain), conferring substrate specificity of the enzyme complex. Interacts with the GW182 family proteins tnrc6a, tnrc6b and tnrc6c.

The protein resides in the cytoplasm. It localises to the P-body. In terms of biological role, regulatory subunit of the poly(A)-nuclease (PAN) deadenylation complex, one of two cytoplasmic mRNA deadenylases involved in general and miRNA-mediated mRNA turnover. PAN specifically shortens poly(A) tails of RNA and the activity is stimulated by poly(A)-binding protein (PABP). PAN deadenylation is followed by rapid degradation of the shortened mRNA tails by the CCR4-NOT complex. Deadenylated mRNAs are then degraded by two alternative mechanisms, namely exosome-mediated 3'-5' exonucleolytic degradation, or deadenylation-dependent mRNA decaping and subsequent 5'-3' exonucleolytic degradation by XRN1. PAN3 acts as a positive regulator for PAN activity, recruiting the catalytic subunit PAN2 to mRNA via its interaction with RNA and PABP, and to miRNA targets via its interaction with GW182 family proteins. This chain is PAN2-PAN3 deadenylation complex subunit pan3, found in Xenopus tropicalis (Western clawed frog).